Reading from the N-terminus, the 592-residue chain is Aspartate--tRNA ligase (592 aa).

Glutamate 180 is a binding site for L-aspartate. An aspartate region spans residues 204 to 207 (QLFK). Residue arginine 226 participates in L-aspartate binding. Residues 226–228 (RDE) and glutamine 235 contribute to the ATP site. Histidine 455 is an L-aspartate binding site. Glutamate 489 lines the ATP pocket. Arginine 496 serves as a coordination point for L-aspartate. 541-544 (GFDR) is an ATP binding site.

The protein belongs to the class-II aminoacyl-tRNA synthetase family. Type 1 subfamily. Homodimer.

It is found in the cytoplasm. The catalysed reaction is tRNA(Asp) + L-aspartate + ATP = L-aspartyl-tRNA(Asp) + AMP + diphosphate. Functionally, catalyzes the attachment of L-aspartate to tRNA(Asp) in a two-step reaction: L-aspartate is first activated by ATP to form Asp-AMP and then transferred to the acceptor end of tRNA(Asp). This Clostridium tetani (strain Massachusetts / E88) protein is Aspartate--tRNA ligase.